Reading from the N-terminus, the 462-residue chain is MSAILTDRQAEELHKAIIAYLGVINAPKTAAAFREEVNFSAAFDDATRKKYEGLLEKKWTSVVRLQKKVLELEQRNQSLQSELDSTTPTSLLRRNQDPSSWLPRAPARHTLQSHRSPITCVAFHPVFSSLASGSEDTTIKIWDWELGELERTVKGHTKGVLDVDFGGPRGGTLLASCSSDLTIKLWDPSDEYKNIRTLPGHDHSVSAIRFVPSGAAGSPSSGNLLVSASRDKTLRVWDVTTGYCVKTIRGHADWVRDVSPSFDGRWLLSAGNDQTARLWDASSGEAKCTFLGHEHVIECVTIAPPVSYANLASLAGLKKPPPLSSSAEFVATGSRDKTIKIWDGRGTLIKTLAGHDNWVRALIFHPGGKYLLSASDDKTIRCWDLTQEGRCVKVVTDAHSHFVSCMRWAPNVVKDAPTNGDAPNGTTANGASKKKDEESAKAGIRCVIATGCVDLNVRIFAS.

The LisH domain occupies 9 to 41; it reads QAEELHKAIIAYLGVINAPKTAAAFREEVNFSA. Residues 60-87 adopt a coiled-coil conformation; that stretch reads TSVVRLQKKVLELEQRNQSLQSELDSTT. Polar residues predominate over residues 78-99; the sequence is SLQSELDSTTPTSLLRRNQDPS. Residues 78-103 form a disordered region; the sequence is SLQSELDSTTPTSLLRRNQDPSSWLP. WD repeat units lie at residues 113-154, 156-196, 200-247, 250-289, 292-352, 354-393, 398-445, and 447-462; these read SHRS…RTVK, HTKG…KNIR, GHDH…CVKT, GHAD…AKCT, GHEH…IKTL, GHDN…RCVK, AHSH…AGIR, and VIAT…IFAS. The segment at 414–434 is disordered; the sequence is KDAPTNGDAPNGTTANGASKK.

This sequence belongs to the WD repeat LIS1/nudF family. As to quaternary structure, self-associates. Interacts with NDL1 and dynein.

The protein resides in the cytoplasm. The protein localises to the cytoskeleton. It localises to the spindle pole. Positively regulates the activity of the minus-end directed microtubule motor protein dynein. May enhance dynein-mediated microtubule sliding by targeting dynein to the microtubule plus end. Required for nuclear migration during vegetative growth as well as development. Required for retrograde early endosome (EE) transport from the hyphal tip. Required for localization of dynein to the mitotic spindle poles. Recruits additional proteins to the dynein complex at SPBs. This chain is Nuclear distribution protein PAC1, found in Phaeosphaeria nodorum (strain SN15 / ATCC MYA-4574 / FGSC 10173) (Glume blotch fungus).